An 85-amino-acid chain; its full sequence is Small ribosomal subunit protein bS16c (85 aa).

This sequence belongs to the bacterial ribosomal protein bS16 family.

It localises to the plastid. Its subcellular location is the chloroplast. The polypeptide is Small ribosomal subunit protein bS16c (Cucumis sativus (Cucumber)).